Consider the following 551-residue polypeptide: Terpene synthase 10 (551 aa).

Residues aspartate 303, aspartate 307, and glutamate 455 each coordinate Mg(2+). The DDXXD motif signature appears at 303 to 307 (DDIYD).

The protein belongs to the terpene synthase family. Requires Mg(2+) as cofactor.

Catalyzes the cyclization of farnesyl diphosphate to sesquiterpene olefins. The protein is Terpene synthase 10 (TPS10) of Ricinus communis (Castor bean).